The chain runs to 576 residues: Arginine--tRNA ligase (576 aa).

The short motif at 126 to 136 is the 'HIGH' region element; the sequence is ANPTGPMHIGH.

This sequence belongs to the class-I aminoacyl-tRNA synthetase family. In terms of assembly, monomer.

It localises to the cytoplasm. It catalyses the reaction tRNA(Arg) + L-arginine + ATP = L-arginyl-tRNA(Arg) + AMP + diphosphate. This Rickettsia bellii (strain OSU 85-389) protein is Arginine--tRNA ligase.